A 143-amino-acid polypeptide reads, in one-letter code: MAIERTFSIIKPDAVAKNHIGAIYNRFETAGLKIIASKMLHLSKEQAEGFYAEHSERPFFGALVEFMTSGPICVQVLEGENAVLANREIMGATNPAEAARGTIRSDFADSIDENAVHGSDAVASAEREIAYFFSTEELCPRTR.

Residues K11, F59, R87, T93, R104, and N114 each coordinate ATP. The active-site Pros-phosphohistidine intermediate is the H117.

This sequence belongs to the NDK family. As to quaternary structure, homotetramer. Requires Mg(2+) as cofactor.

Its subcellular location is the cytoplasm. It carries out the reaction a 2'-deoxyribonucleoside 5'-diphosphate + ATP = a 2'-deoxyribonucleoside 5'-triphosphate + ADP. The catalysed reaction is a ribonucleoside 5'-diphosphate + ATP = a ribonucleoside 5'-triphosphate + ADP. Functionally, major role in the synthesis of nucleoside triphosphates other than ATP. The ATP gamma phosphate is transferred to the NDP beta phosphate via a ping-pong mechanism, using a phosphorylated active-site intermediate. The chain is Nucleoside diphosphate kinase from Shewanella sediminis (strain HAW-EB3).